A 101-amino-acid chain; its full sequence is Interleukin-8 (101 aa).

An N-terminal signal peptide occupies residues 1 to 22 (MTSKLAVALLAAFLLSAALCEA). Disulfide bonds link C34–C61 and C36–C77.

This sequence belongs to the intercrine alpha (chemokine CxC) family. As to quaternary structure, homodimer. Interacts with TNFAIP6 (via Link domain); this interaction interferes with chemokine binding to glycosaminoglycans.

The protein resides in the secreted. Chemotactic factor that mediates inflammatory response by attracting neutrophils, basophils, and T-cells to clear pathogens and protect the host from infection. Also plays an important role in neutrophil activation. Released in response to an inflammatory stimulus, exerts its effect by binding to the G-protein-coupled receptors CXCR1 and CXCR2, primarily found in neutrophils, monocytes and endothelial cells. G-protein heterotrimer (alpha, beta, gamma subunits) constitutively binds to CXCR1/CXCR2 receptor and activation by IL8 leads to beta and gamma subunits release from Galpha (GNAI2 in neutrophils) and activation of several downstream signaling pathways including PI3K and MAPK pathways. The sequence is that of Interleukin-8 (CXCL8) from Bos taurus (Bovine).